Reading from the N-terminus, the 403-residue chain is 26S proteasome regulatory subunit 8 homolog (403 aa).

186–193 (GPPGTGKT) contacts ATP.

The protein belongs to the AAA ATPase family.

The protein localises to the cytoplasm. The protein resides in the nucleus. Its function is as follows. The 26S proteasome is involved in the ATP-dependent degradation of ubiquitinated proteins. The regulatory (or ATPase) complex confers ATP dependency and substrate specificity to the 26S complex. The protein is 26S proteasome regulatory subunit 8 homolog (let1) of Schizosaccharomyces pombe (strain 972 / ATCC 24843) (Fission yeast).